The sequence spans 84 residues: RNA-binding protein Hfq (84 aa).

Residues 11–71 enclose the Sm domain; that stretch reads DTFLNHVRKN…ISTIMPGHPV (61 aa).

The protein belongs to the Hfq family. As to quaternary structure, homohexamer.

Its function is as follows. RNA chaperone that binds small regulatory RNA (sRNAs) and mRNAs to facilitate mRNA translational regulation in response to envelope stress, environmental stress and changes in metabolite concentrations. Also binds with high specificity to tRNAs. The protein is RNA-binding protein Hfq of Methylobacterium nodulans (strain LMG 21967 / CNCM I-2342 / ORS 2060).